The following is a 246-amino-acid chain: Probable transcriptional regulatory protein COSY_0365 (246 aa).

The protein belongs to the TACO1 family.

The protein localises to the cytoplasm. The protein is Probable transcriptional regulatory protein COSY_0365 of Vesicomyosocius okutanii subsp. Calyptogena okutanii (strain HA).